Here is a 267-residue protein sequence, read N- to C-terminus: Hydroxynaphthalene reductase-like protein Arp2 (267 aa).

NADP(+)-binding residues include Ile25, Asn45, Asp71, and Asn98. Residues Ser147 and Ser148 each act as proton donor in the active site. 4 residues coordinate NADP(+): Tyr162, Lys166, Val195, and Thr197. Tyr162 functions as the Proton acceptor in the catalytic mechanism. The active-site Lowers pKa of active site Tyr is the Lys166.

Belongs to the short-chain dehydrogenases/reductases (SDR) family.

In terms of biological role, hydroxynaphthalene reductase-like protein; part of the Pks2 gene cluster that mediates the formation of infectious structures (appressoria), enabling these fungi to kill insects faster. The product of the Pks2 gene cluster is different from the one of Pks1 and has still not been identified. The sequence is that of Hydroxynaphthalene reductase-like protein Arp2 from Metarhizium brunneum (strain ARSEF 3297).